A 386-amino-acid polypeptide reads, in one-letter code: Galactokinase (386 aa).

Position 35–38 (35–38 (EHTD)) interacts with substrate. 125–131 (GAGLSSS) is a binding site for ATP. Mg(2+)-binding residues include serine 131 and glutamate 163. The active-site Proton acceptor is aspartate 175. Tyrosine 224 is a binding site for substrate.

This sequence belongs to the GHMP kinase family. GalK subfamily.

Its subcellular location is the cytoplasm. The enzyme catalyses alpha-D-galactose + ATP = alpha-D-galactose 1-phosphate + ADP + H(+). The protein operates within carbohydrate metabolism; galactose metabolism. Functionally, catalyzes the transfer of the gamma-phosphate of ATP to D-galactose to form alpha-D-galactose-1-phosphate (Gal-1-P). This Vibrio cholerae serotype O1 (strain ATCC 39315 / El Tor Inaba N16961) protein is Galactokinase.